The primary structure comprises 1270 residues: DNA-directed RNA polymerase subunit beta (1270 aa).

This sequence belongs to the RNA polymerase beta chain family. The RNAP catalytic core consists of 2 alpha, 1 beta, 1 beta' and 1 omega subunit. When a sigma factor is associated with the core the holoenzyme is formed, which can initiate transcription.

It carries out the reaction RNA(n) + a ribonucleoside 5'-triphosphate = RNA(n+1) + diphosphate. Its function is as follows. DNA-dependent RNA polymerase catalyzes the transcription of DNA into RNA using the four ribonucleoside triphosphates as substrates. The sequence is that of DNA-directed RNA polymerase subunit beta from Bacteroides fragilis (strain ATCC 25285 / DSM 2151 / CCUG 4856 / JCM 11019 / LMG 10263 / NCTC 9343 / Onslow / VPI 2553 / EN-2).